Consider the following 204-residue polypeptide: ATP-dependent Clp protease proteolytic subunit (204 aa).

The active-site Nucleophile is serine 102. Histidine 127 is an active-site residue.

It belongs to the peptidase S14 family. In terms of assembly, fourteen ClpP subunits assemble into 2 heptameric rings which stack back to back to give a disk-like structure with a central cavity, resembling the structure of eukaryotic proteasomes.

The protein resides in the cytoplasm. It catalyses the reaction Hydrolysis of proteins to small peptides in the presence of ATP and magnesium. alpha-casein is the usual test substrate. In the absence of ATP, only oligopeptides shorter than five residues are hydrolyzed (such as succinyl-Leu-Tyr-|-NHMec, and Leu-Tyr-Leu-|-Tyr-Trp, in which cleavage of the -Tyr-|-Leu- and -Tyr-|-Trp bonds also occurs).. In terms of biological role, cleaves peptides in various proteins in a process that requires ATP hydrolysis. Has a chymotrypsin-like activity. Plays a major role in the degradation of misfolded proteins. In Neisseria gonorrhoeae (strain ATCC 700825 / FA 1090), this protein is ATP-dependent Clp protease proteolytic subunit.